Here is a 142-residue protein sequence, read N- to C-terminus: MRLLGLDVGSKTVGVAISDELGITAQKLETIQIDETKYNFGMRPLKKLVRQYDVDGFVLGLPKNMDGTSGNSVARSKAYGKRLEEKFNLPVYYSDERLTTIESRRVLIEDAGMHDRKKRKQVIDQMAAVLILQNYLDLHRKD.

This sequence belongs to the YqgF nuclease family.

It localises to the cytoplasm. Its function is as follows. Could be a nuclease involved in processing of the 5'-end of pre-16S rRNA. The sequence is that of Putative pre-16S rRNA nuclease from Lactobacillus acidophilus (strain ATCC 700396 / NCK56 / N2 / NCFM).